The following is a 258-amino-acid chain: Indole-3-glycerol phosphate synthase (258 aa).

It belongs to the TrpC family.

It carries out the reaction 1-(2-carboxyphenylamino)-1-deoxy-D-ribulose 5-phosphate + H(+) = (1S,2R)-1-C-(indol-3-yl)glycerol 3-phosphate + CO2 + H2O. Its pathway is amino-acid biosynthesis; L-tryptophan biosynthesis; L-tryptophan from chorismate: step 4/5. In Geobacillus kaustophilus (strain HTA426), this protein is Indole-3-glycerol phosphate synthase.